A 375-amino-acid polypeptide reads, in one-letter code: Probable UDP-N-acetylglucosamine 2-epimerase (375 aa).

The protein belongs to the UDP-N-acetylglucosamine 2-epimerase family.

Its subcellular location is the cytoplasm. It catalyses the reaction UDP-N-acetyl-alpha-D-glucosamine = UDP-N-acetyl-alpha-D-mannosamine. It functions in the pathway glycan metabolism; exopolysaccharide EPS I biosynthesis. In terms of biological role, may be involved in synthesis of N-acetyltrideoxygalactose, a component of exopolysaccharide EPS I which functions as a virulence factor. This Ralstonia solanacearum (Pseudomonas solanacearum) protein is Probable UDP-N-acetylglucosamine 2-epimerase (epsC).